Reading from the N-terminus, the 224-residue chain is Ankyrin repeat domain-containing protein 45 (224 aa).

ANK repeat units follow at residues 46–76 (VGRN…DVNE) and 80–109 (RGYS…DFQA).

Widely expressed.

It localises to the cytoplasm. The protein localises to the midbody. Its subcellular location is the midbody ring. The protein resides in the cleavage furrow. In terms of biological role, may play a role during cell division. This is Ankyrin repeat domain-containing protein 45 from Danio rerio (Zebrafish).